Here is a 284-residue protein sequence, read N- to C-terminus: Heat stress transcription factor B-1 (284 aa).

Residues 12-106 (PAPFLSKTYQ…LLTDIRRRKS (95 aa)) mediate DNA binding. Residues 118-151 (VGSPSESNSGGGDDHGSSSTSSPGSSKNPGSVEN) are disordered. Over residues 134 to 148 (SSSTSSPGSSKNPGS) the composition is skewed to low complexity. A hydrophobic repeat HR-A/B region spans residues 147–192 (GSVENMVADLSGENEKLKRENNNLSSELAAAKKQRDELVTFLTGHL). A Nuclear localization signal motif is present at residues 247 to 252 (RKKRDR).

It belongs to the HSF family. Class B subfamily. In terms of assembly, homotrimer. In terms of processing, exhibits temperature-dependent phosphorylation.

Its subcellular location is the nucleus. In terms of biological role, transcriptional regulator that specifically binds DNA sequence 5'-AGAAnnTTCT-3' known as heat shock promoter elements (HSE). The protein is Heat stress transcription factor B-1 (HSFB1) of Arabidopsis thaliana (Mouse-ear cress).